Consider the following 361-residue polypeptide: NudC domain-containing protein 3 (361 aa).

Residues Lys87 to Lys97 are compositionally biased toward basic and acidic residues. 2 disordered regions span residues Lys87–Lys106 and Leu124–Ala158. A Phosphoserine modification is found at Ser146. Positions Glu148–Ala158 are enriched in low complexity. The CS domain maps to Ala185–Leu277. Residues Ser340 and Ser355 each carry the phosphoserine modification.

The chain is NudC domain-containing protein 3 (NUDCD3) from Homo sapiens (Human).